We begin with the raw amino-acid sequence, 264 residues long: Teichoic acids export ATP-binding protein TagH (264 aa).

In terms of domain architecture, ABC transporter spans 24-243 (IKDALIPKNK…YEQFLKDFKK (220 aa)). 57-64 (GINGSGKS) lines the ATP pocket.

This sequence belongs to the ABC transporter superfamily. Teichoic acids exporter (TC 3.A.1.104.1) family. As to quaternary structure, the complex is composed of two ATP-binding proteins (TagH) and two transmembrane proteins (TagG).

It is found in the cell membrane. It carries out the reaction ATP + H2O + teichoic acidSide 1 = ADP + phosphate + teichoic acidSide 2.. Functionally, part of the ABC transporter complex TagGH involved in teichoic acids export. Responsible for energy coupling to the transport system. The polypeptide is Teichoic acids export ATP-binding protein TagH (Staphylococcus haemolyticus (strain JCSC1435)).